A 468-amino-acid polypeptide reads, in one-letter code: Sushi repeat-containing protein SRPX2 (468 aa).

The signal sequence occupies residues M1–T25. Sushi domains follow at residues A72–Q122, I123–D181, and R265–P324. Cystine bridges form between C74–C108, C94–C120, C125–C166, and C152–C179. Residues V180–V264 enclose the HYR domain. 2 disulfides stabilise this stretch: C267/C309 and C295/C322.

Forms homooligomers. Interacts with PLAUR (via the UPAR/Ly6 domains), ADAMTS4 and CTSB. Interacts with HGF; the interaction increases the mitogenic activity of HGF. In terms of processing, contains chondroitin sulfate chains. As to expression, expressed in angiogenic endothelial cells (at protein level).

It is found in the secreted. The protein localises to the cytoplasm. Its subcellular location is the cell surface. It localises to the synapse. Acts as a ligand for the urokinase plasminogen activator surface receptor. Plays a role in angiogenesis by inducing endothelial cell migration and the formation of vascular network (cords). Involved in cellular migration and adhesion. Increases the phosphorylation levels of FAK. Interacts with and increases the mitogenic activity of HGF. Promotes synapse formation. Required for ultrasonic vocalizations. This Mus musculus (Mouse) protein is Sushi repeat-containing protein SRPX2 (Srpx2).